We begin with the raw amino-acid sequence, 383 residues long: Putative glutamate--cysteine ligase 2 (383 aa).

Belongs to the glutamate--cysteine ligase type 2 family. YbdK subfamily.

It catalyses the reaction L-cysteine + L-glutamate + ATP = gamma-L-glutamyl-L-cysteine + ADP + phosphate + H(+). In terms of biological role, ATP-dependent carboxylate-amine ligase which exhibits weak glutamate--cysteine ligase activity. This is Putative glutamate--cysteine ligase 2 from Clavibacter michiganensis subsp. michiganensis (strain NCPPB 382).